Reading from the N-terminus, the 396-residue chain is MLDTQTIAIVKSTIPLLAATGPKLTAHFYERMFKHHPELKNIFNMSNQSSGDQREALFNAICAYATNIENLAALLPTVERIAQKHTSLNIQPEHYPIVGEHLIATLDELFSPGQAVLDAWAKAYGVLADVFIQRESQIYQQSETETGGWRTLRRFRIIKKEQQSEVICSFVLAPEDGGQVLHYKPGQYLGIYIEHESLEFQEIRQYSLTTAPNGKTYRIAVKREEQGTVSNLLHRELNEGDIVRIAPPRGDFFLDVSPDTPVALISAGVGQTPMLSMLNTLYSQQHAAPVHWLHAAENGRVHAFADEVSAIAAKMPNLSRHVWYREPDLQDKHGEDYHSQGLMDLSSYQWLADDPKRHYYFCGPLPFMQFIGRQLLAQGIAPEQIHYECFGPHKVI.

A Globin domain is found at 1–136 (MLDTQTIAIV…LADVFIQRES (136 aa)). His85 lines the heme b pocket. Residues Tyr95 and Glu135 each act as charge relay system in the active site. Positions 147-396 (GGWRTLRRFR…YECFGPHKVI (250 aa)) are reductase. The 106-residue stretch at 150 to 255 (RTLRRFRIIK…APPRGDFFLD (106 aa)) folds into the FAD-binding FR-type domain. Residues Tyr188 and 204-207 (RQYS) contribute to the FAD site. An NADP(+)-binding site is contributed by 268 to 273 (GVGQTP). 389 to 392 (CFGP) provides a ligand contact to FAD.

It belongs to the globin family. Two-domain flavohemoproteins subfamily. In the C-terminal section; belongs to the flavoprotein pyridine nucleotide cytochrome reductase family. Requires heme b as cofactor. The cofactor is FAD.

It catalyses the reaction 2 nitric oxide + NADPH + 2 O2 = 2 nitrate + NADP(+) + H(+). It carries out the reaction 2 nitric oxide + NADH + 2 O2 = 2 nitrate + NAD(+) + H(+). Its function is as follows. Is involved in NO detoxification in an aerobic process, termed nitric oxide dioxygenase (NOD) reaction that utilizes O(2) and NAD(P)H to convert NO to nitrate, which protects the bacterium from various noxious nitrogen compounds. Therefore, plays a central role in the inducible response to nitrosative stress. The polypeptide is Flavohemoprotein (Yersinia pestis).